A 341-amino-acid polypeptide reads, in one-letter code: ATPase GET3 (341 aa).

34–41 (KGGVGKTT) provides a ligand contact to ATP. The active site involves Asp-63. Residues Glu-245 and Asn-272 each coordinate ATP. Cys-283 and Cys-286 together coordinate Zn(2+).

The protein belongs to the arsA ATPase family. In terms of assembly, homodimer.

The protein resides in the cytoplasm. The protein localises to the endoplasmic reticulum. Functionally, ATPase required for the post-translational delivery of tail-anchored (TA) proteins to the endoplasmic reticulum. Recognizes and selectively binds the transmembrane domain of TA proteins in the cytosol. This complex then targets to the endoplasmic reticulum by membrane-bound receptors, where the tail-anchored protein is released for insertion. This process is regulated by ATP binding and hydrolysis. ATP binding drives the homodimer towards the closed dimer state, facilitating recognition of newly synthesized TA membrane proteins. ATP hydrolysis is required for insertion. Subsequently, the homodimer reverts towards the open dimer state, lowering its affinity for the membrane-bound receptor, and returning it to the cytosol to initiate a new round of targeting. The polypeptide is ATPase GET3 (Ajellomyces dermatitidis (strain ER-3 / ATCC MYA-2586) (Blastomyces dermatitidis)).